The chain runs to 473 residues: Adenosylhomocysteinase (473 aa).

Substrate is bound by residues Thr64, Asp139, and Glu199. 200 to 202 (TTT) contacts NAD(+). Substrate-binding residues include Lys229 and Asp233. Residues Asn234, 263–268 (GYGDVG), Glu286, Asn321, 342–344 (IGH), and Asn387 each bind NAD(+).

The protein belongs to the adenosylhomocysteinase family. NAD(+) serves as cofactor.

Its subcellular location is the cytoplasm. It catalyses the reaction S-adenosyl-L-homocysteine + H2O = L-homocysteine + adenosine. The protein operates within amino-acid biosynthesis; L-homocysteine biosynthesis; L-homocysteine from S-adenosyl-L-homocysteine: step 1/1. Functionally, may play a key role in the regulation of the intracellular concentration of adenosylhomocysteine. In Burkholderia mallei (strain SAVP1), this protein is Adenosylhomocysteinase.